Here is a 382-residue protein sequence, read N- to C-terminus: Lipid-A-disaccharide synthase (382 aa).

This sequence belongs to the LpxB family.

It carries out the reaction 2-N,3-O-bis[(3R)-3-hydroxytetradecanoyl]-alpha-D-glucosaminyl 1-phosphate + UDP-2-N,3-O-bis[(3R)-3-hydroxytetradecanoyl]-alpha-D-glucosamine = lipid A disaccharide (E. coli) + UDP + H(+). It catalyses the reaction a lipid X + a UDP-2-N,3-O-bis[(3R)-3-hydroxyacyl]-alpha-D-glucosamine = a lipid A disaccharide + UDP + H(+). The protein operates within glycolipid biosynthesis; lipid IV(A) biosynthesis; lipid IV(A) from (3R)-3-hydroxytetradecanoyl-[acyl-carrier-protein] and UDP-N-acetyl-alpha-D-glucosamine: step 5/6. Its function is as follows. Condensation of UDP-2,3-diacylglucosamine and 2,3-diacylglucosamine-1-phosphate to form lipid A disaccharide, a precursor of lipid A, a phosphorylated glycolipid that anchors the lipopolysaccharide to the outer membrane of the cell. The sequence is that of Lipid-A-disaccharide synthase from Escherichia coli O8 (strain IAI1).